Reading from the N-terminus, the 425-residue chain is Serine--tRNA ligase (425 aa).

Disordered regions lie at residues 43–69 and 108–134; these read QRSS…SDPK and LPNL…WGKP. Basic and acidic residues predominate over residues 117-134; the sequence is PEGRDENDNQERHRWGKP. An L-serine-binding site is contributed by 233 to 235; it reads TAE. 264–266 provides a ligand contact to ATP; the sequence is RRE. Glu-287 is an L-serine binding site. Position 351–354 (351–354) interacts with ATP; sequence EISS. Ser-385 contacts L-serine.

The protein belongs to the class-II aminoacyl-tRNA synthetase family. Type-1 seryl-tRNA synthetase subfamily. Homodimer. The tRNA molecule binds across the dimer.

It localises to the cytoplasm. The enzyme catalyses tRNA(Ser) + L-serine + ATP = L-seryl-tRNA(Ser) + AMP + diphosphate + H(+). It catalyses the reaction tRNA(Sec) + L-serine + ATP = L-seryl-tRNA(Sec) + AMP + diphosphate + H(+). Its pathway is aminoacyl-tRNA biosynthesis; selenocysteinyl-tRNA(Sec) biosynthesis; L-seryl-tRNA(Sec) from L-serine and tRNA(Sec): step 1/1. Its function is as follows. Catalyzes the attachment of serine to tRNA(Ser). Is also able to aminoacylate tRNA(Sec) with serine, to form the misacylated tRNA L-seryl-tRNA(Sec), which will be further converted into selenocysteinyl-tRNA(Sec). This Prochlorococcus marinus (strain MIT 9313) protein is Serine--tRNA ligase.